The sequence spans 420 residues: MAKPPAVAAAAAAAASEELSQVPDEELLRWSKEELARRLRRAEGEKVGLMLEHGGLMRDVNRRLQQHLLEIRGLKDVNQRLQDDNQELRELCCFLDDDRQKGRKLAREWQRFGRHAAGAVWHEVARSQQKLRELEARQEALLRENLELKELVLLLDEERAALAAAGGAGGGGGGAGSRSSIDSQASLSGPLAGSAAGSGARDVGDGSSTSSAGSGGSPDHHHHVPAALLPPGPHKVPDGKAGATRRSLDDLSAPPHHRSIPNGLHDPSSTYIRPLETKVKLLDGDKLPPQQAGSGEFRTLRKGFSPYHSESQLASLPPSYQEVLQNGPACPVPELPSPPSTVYSSAGQKPEAVVHAMKVLEVHENLDRQLQDSCEEDLSEKEKAIVREMCNVVWRKLGDAASTKPSIRQHLSGNQFKGPL.

A2 is subject to N-acetylalanine. 2 coiled-coil regions span residues E26 to C92 and H122 to A165. The tract at residues A165–Y271 is disordered. A compositionally biased stretch (gly residues) spans G166–G176. S179 is subject to Phosphoserine. Residues A185–A212 show a composition bias toward low complexity. S247 bears the Phosphoserine mark.

The protein belongs to the CCDC85 family. In terms of assembly, may interact with ARVCF, CTNND1, CTNND2 and PKP4. In terms of tissue distribution, predominantly expressed on the surface of the lateral ventricular walls of the developing cerebral cortex.

The protein resides in the cell junction. It is found in the tight junction. It localises to the adherens junction. Functionally, may play a role in cell-cell adhesion and epithelium development through its interaction with proteins of the beta-catenin family. May play an important role in cortical development, especially in the maintenance of radial glia. This Mus musculus (Mouse) protein is Coiled-coil domain-containing protein 85C (Ccdc85c).